The primary structure comprises 454 residues: Glutamyl-tRNA reductase (454 aa).

Substrate is bound by residues 49 to 52 (TCNR), Ser109, 114 to 116 (ETQ), and Gln120. Cys50 functions as the Nucleophile in the catalytic mechanism. 189–194 (GAGKMS) contacts NADP(+). Residues 432-442 (DHAEQSWKEGQ) are compositionally biased toward basic and acidic residues. A disordered region spans residues 432–454 (DHAEQSWKEGQRPSLNQGMALRT).

The protein belongs to the glutamyl-tRNA reductase family. In terms of assembly, homodimer.

The catalysed reaction is (S)-4-amino-5-oxopentanoate + tRNA(Glu) + NADP(+) = L-glutamyl-tRNA(Glu) + NADPH + H(+). Its pathway is porphyrin-containing compound metabolism; protoporphyrin-IX biosynthesis; 5-aminolevulinate from L-glutamyl-tRNA(Glu): step 1/2. In terms of biological role, catalyzes the NADPH-dependent reduction of glutamyl-tRNA(Glu) to glutamate 1-semialdehyde (GSA). This chain is Glutamyl-tRNA reductase, found in Shouchella clausii (strain KSM-K16) (Alkalihalobacillus clausii).